Consider the following 345-residue polypeptide: Selenide, water dikinase (345 aa).

Residue cysteine 16 is part of the active site. ATP contacts are provided by residues lysine 19 and 45-47 (TSE). Aspartate 48 lines the Mg(2+) pocket. Residues aspartate 65, aspartate 88, and 136-138 (GHT) contribute to the ATP site. Aspartate 88 contacts Mg(2+). Position 224 (aspartate 224) interacts with Mg(2+).

It belongs to the selenophosphate synthase 1 family. Class I subfamily. In terms of assembly, homodimer. The cofactor is Mg(2+).

The enzyme catalyses hydrogenselenide + ATP + H2O = selenophosphate + AMP + phosphate + 2 H(+). Its function is as follows. Synthesizes selenophosphate from selenide and ATP. The sequence is that of Selenide, water dikinase from Aliarcobacter butzleri (strain RM4018) (Arcobacter butzleri).